A 65-amino-acid polypeptide reads, in one-letter code: MKTSGTVYVFLLLLAFGIFTDISSACSEQMDDEDSYEVEKRGNACIEVCLQHTGNPAECDKACDK.

Residues 1–26 (MKTSGTVYVFLLLLAFGIFTDISSAC) form the signal peptide. Residues 27–39 (SEQMDDEDSYEVE) constitute a propeptide that is removed on maturation. 2 disulfides stabilise this stretch: Cys-45–Cys-63 and Cys-49–Cys-59.

Belongs to the short scorpion toxin superfamily. Potassium channel inhibitor kappa-KTx family. Kappa-KTx 2 subfamily. As to expression, expressed by the venom gland.

The protein localises to the secreted. Its function is as follows. Weakly inhibits the Kv7.1/KCNQ1 channel (10 uM of the toxin inhibits currents by 17.8%). This Heterometrus petersii (Asian forest scorpion) protein is Potassium channel toxin kappa-KTx 2.7.